The primary structure comprises 356 residues: Nicotinate-nucleotide--dimethylbenzimidazole phosphoribosyltransferase (356 aa).

Residue glutamate 317 is the Proton acceptor of the active site.

It belongs to the CobT family. As to quaternary structure, homodimer.

The enzyme catalyses 5,6-dimethylbenzimidazole + nicotinate beta-D-ribonucleotide = alpha-ribazole 5'-phosphate + nicotinate + H(+). It functions in the pathway nucleoside biosynthesis; alpha-ribazole biosynthesis; alpha-ribazole from 5,6-dimethylbenzimidazole: step 1/2. Its function is as follows. Catalyzes the synthesis of alpha-ribazole-5'-phosphate from nicotinate mononucleotide (NAMN) and 5,6-dimethylbenzimidazole (DMB). The protein is Nicotinate-nucleotide--dimethylbenzimidazole phosphoribosyltransferase of Salmonella schwarzengrund (strain CVM19633).